The following is a 311-amino-acid chain: Malate dehydrogenase (311 aa).

Residues 7-13 and Asp-34 each bind NAD(+); that span reads GAAGGIG. 2 residues coordinate substrate: Arg-81 and Arg-87. NAD(+) is bound by residues Asn-94 and 117 to 119; that span reads ITN. Substrate contacts are provided by Asn-119 and Arg-153. Residue His-177 is the Proton acceptor of the active site. NAD(+) is bound at residue Met-227.

Belongs to the LDH/MDH superfamily. MDH type 1 family. As to quaternary structure, homodimer.

It carries out the reaction (S)-malate + NAD(+) = oxaloacetate + NADH + H(+). Catalyzes the reversible oxidation of malate to oxaloacetate. The protein is Malate dehydrogenase of Shewanella frigidimarina (strain NCIMB 400).